The chain runs to 381 residues: Glycerol-3-phosphate dehydrogenase [NAD(+)] (381 aa).

The interval 1-27 (MTAMDRLDHVSNQLAAKRQKKNPEGKP) is disordered. NAD(+) contacts are provided by residues 34 to 39 (GSGNWG), phenylalanine 66, and phenylalanine 122. Lysine 145 serves as a coordination point for substrate. Residue alanine 178 participates in NAD(+) binding. Lysine 238 acts as the Proton acceptor in catalysis. The NAD(+) site is built by arginine 303 and glutamine 332. 303-304 (RN) contributes to the substrate binding site.

Belongs to the NAD-dependent glycerol-3-phosphate dehydrogenase family.

The catalysed reaction is sn-glycerol 3-phosphate + NAD(+) = dihydroxyacetone phosphate + NADH + H(+). The polypeptide is Glycerol-3-phosphate dehydrogenase [NAD(+)] (GPD) (Pichia angusta (Yeast)).